The following is a 657-amino-acid chain: MRGCLQSVKWLTSALRPSQSLASSTRYPRRLLSTSAPRNAQVRKPASEVEQRIAAIPIERFRNFCIVAHVDHGKSTLSDRLLELTGTIEAGANKQVLDKLDVERERGITVKAQTCSMLYNHQGEDYLLHLVDTPGHVDFRAEVSRSYASCGGALLLVDASQGIQAQTVANFYLAFAEGLKLVPVINKVDLPSADPQRALDQMKNTFELDPESAVLVSAKTGLNVSQLLPTVIEQIPAPVGDRTKPLRMLLVDSWYSTYKGVILLVRLFDGEIRVGDQVVSFATGLKYTVGEVGIMYPWQTAQSVLRAGQVGYIYFNPAMKRSQEAKVGDTYTKVGSEKLVQPLPGFEEPKAMVFVAAYPVDASDFPHLEDSINQLILNDRSVTLQKESSEALGAGFRLGFLGTLHCSVFEDRLRQEHGASIIITPPTVPFKVIWKDGKEEIITNPALFPEEDTLRAKVTELQEPFVLATLTFPEEYLGRVIELCESNRGEQKSLEFFTSTQVILKYELPLAQLVDDFFGKLKGSTKGYASLDYEESGWRRSNISKLQLLVNKVPVDAVSRVVHSSQVQRLGRLWVSKFKEHVDRQMFEVVIQAAAGRNVVARESIKPFRKDVLQKLHAADVTRRKKLLEKQKEGRKKLKAVGNVVIEHKAFQAFLAK.

A mitochondrion-targeting transit peptide spans 1-39; that stretch reads MRGCLQSVKWLTSALRPSQSLASSTRYPRRLLSTSAPRN. Residues 59–239 form the tr-type G domain; it reads ERFRNFCIVA…TVIEQIPAPV (181 aa). Residues 109–116, 173–177, and 227–230 each bind GTP; these read TVKAQTCS, LAFAE, and LLPT.

This sequence belongs to the TRAFAC class translation factor GTPase superfamily. Classic translation factor GTPase family. LepA subfamily.

The protein localises to the mitochondrion inner membrane. The catalysed reaction is GTP + H2O = GDP + phosphate + H(+). Its function is as follows. Promotes mitochondrial protein synthesis. May act as a fidelity factor of the translation reaction, by catalyzing a one-codon backward translocation of tRNAs on improperly translocated ribosomes. Binds to mitochondrial ribosomes in a GTP-dependent manner. The polypeptide is Translation factor GUF1, mitochondrial (Ajellomyces capsulatus (strain NAm1 / WU24) (Darling's disease fungus)).